We begin with the raw amino-acid sequence, 336 residues long: uncharacterized protein (336 aa).

Disordered regions lie at residues 29-93 (GGVS…HSGA) and 116-147 (LQER…GVTG). Polar residues-rich tracts occupy residues 70–82 (SGGS…TSTA) and 125–141 (PWRT…SQPH).

This is an uncharacterized protein from Bos taurus (Bovine).